A 902-amino-acid chain; its full sequence is Protein translocase subunit SecA (902 aa).

Residues Gln87, 105–109 (GEGKT), and Asp512 each bind ATP. Residues 850 to 902 (RLAKQQQLSHEVTKESQMSAVDGQVASGKKVGRNEPCPCGSGKKYKHCHGKLG) form a disordered region. Residues 853–868 (KQQQLSHEVTKESQMS) are compositionally biased toward polar residues. Residues Cys886, Cys888, Cys897, and His898 each coordinate Zn(2+). Basic residues predominate over residues 892–902 (KKYKHCHGKLG).

The protein belongs to the SecA family. Monomer and homodimer. Part of the essential Sec protein translocation apparatus which comprises SecA, SecYEG and auxiliary proteins SecDF-YajC and YidC. Zn(2+) serves as cofactor.

It is found in the cell inner membrane. The protein localises to the cytoplasm. The catalysed reaction is ATP + H2O + cellular proteinSide 1 = ADP + phosphate + cellular proteinSide 2.. Part of the Sec protein translocase complex. Interacts with the SecYEG preprotein conducting channel. Has a central role in coupling the hydrolysis of ATP to the transfer of proteins into and across the cell membrane, serving both as a receptor for the preprotein-SecB complex and as an ATP-driven molecular motor driving the stepwise translocation of polypeptide chains across the membrane. The polypeptide is Protein translocase subunit SecA (Proteus mirabilis (strain HI4320)).